We begin with the raw amino-acid sequence, 302 residues long: Sulfate adenylyltransferase subunit 2 (302 aa).

It belongs to the PAPS reductase family. CysD subfamily. In terms of assembly, heterodimer composed of CysD, the smaller subunit, and CysN.

The catalysed reaction is sulfate + ATP + H(+) = adenosine 5'-phosphosulfate + diphosphate. Its pathway is sulfur metabolism; hydrogen sulfide biosynthesis; sulfite from sulfate: step 1/3. Its function is as follows. With CysN forms the ATP sulfurylase (ATPS) that catalyzes the adenylation of sulfate producing adenosine 5'-phosphosulfate (APS) and diphosphate, the first enzymatic step in sulfur assimilation pathway. APS synthesis involves the formation of a high-energy phosphoric-sulfuric acid anhydride bond driven by GTP hydrolysis by CysN coupled to ATP hydrolysis by CysD. This Escherichia coli O7:K1 (strain IAI39 / ExPEC) protein is Sulfate adenylyltransferase subunit 2.